A 440-amino-acid polypeptide reads, in one-letter code: Chromosome partition protein MukF (440 aa).

The leucine-zipper stretch occupies residues 208-236 (LSETSGTLRELQDTLEAAGDKLQANLLRI).

This sequence belongs to the MukF family. In terms of assembly, interacts, and probably forms a ternary complex, with MukE and MukB via its C-terminal region. The complex formation is stimulated by calcium or magnesium. It is required for an interaction between MukE and MukB.

Its subcellular location is the cytoplasm. It is found in the nucleoid. Functionally, involved in chromosome condensation, segregation and cell cycle progression. May participate in facilitating chromosome segregation by condensation DNA from both sides of a centrally located replisome during cell division. Not required for mini-F plasmid partitioning. Probably acts via its interaction with MukB and MukE. Overexpression results in anucleate cells. It has a calcium binding activity. In Escherichia coli O157:H7, this protein is Chromosome partition protein MukF.